Consider the following 255-residue polypeptide: Major prion protein (255 aa).

The N-terminal stretch at 1–24 (MVKSHIGSWILVLFVAMWSDVGLC) is a signal peptide. The segment at 25-41 (KKRPKPGGGWNTGGSRY) is interaction with ADGRG6. The segment at 25–232 (KKRPKPGGGW…ESEAYYQRGA (208 aa)) is interaction with GRB2, ERI3 and SYN1. Residues 28 to 110 (PKPGGGWNTG…QWNKPSKPKT (83 aa)) are disordered. Tandem repeats lie at residues 54-62 (PQGGGGWGQ), 63-70 (PHGGGWGQ), 71-78 (PHGGGWGQ), 79-86 (PHGGGWGQ), and 87-94 (PHGGGGWG). The interval 54-94 (PQGGGGWGQPHGGGWGQPHGGGWGQPHGGGWGQPHGGGGWG) is 5 X 8 AA tandem repeats of P-H-G-G-G-W-G-Q. The segment covering 55 to 97 (QGGGGWGQPHGGGWGQPHGGGWGQPHGGGWGQPHGGGGWGQGG) has biased composition (gly residues). Residues H64, G65, G66, H72, G73, G74, H80, G81, G82, H88, G90, and G91 each coordinate Cu(2+). Residues N174, N184, and N199 are each glycosylated (N-linked (GlcNAc...) asparagine). A disulfide bond links C182 and C216. A232 carries the GPI-anchor amidated alanine lipid modification. Positions 233–255 (SVILFSSPPVILLVSFLIFLIVG) are cleaved as a propeptide — removed in mature form.

The protein belongs to the prion family. Monomer and homodimer. Has a tendency to aggregate into amyloid fibrils containing a cross-beta spine, formed by a steric zipper of superposed beta-strands. Soluble oligomers may represent an intermediate stage on the path to fibril formation. Copper binding may promote oligomerization. Interacts with GRB2, APP, ERI3/PRNPIP and SYN1. Mislocalized cytosolically exposed PrP interacts with MGRN1; this interaction alters MGRN1 subcellular location and causes lysosomal enlargement. Interacts with APP. Interacts with KIAA1191. Interacts with ADGRG6.

The protein resides in the cell membrane. Its subcellular location is the golgi apparatus. Its primary physiological function is unclear. May play a role in neuronal development and synaptic plasticity. May be required for neuronal myelin sheath maintenance. May promote myelin homeostasis through acting as an agonist for ADGRG6 receptor. May play a role in iron uptake and iron homeostasis. Soluble oligomers are toxic to cultured neuroblastoma cells and induce apoptosis (in vitro). Association with GPC1 (via its heparan sulfate chains) targets PRNP to lipid rafts. Also provides Cu(2+) or Zn(2+) for the ascorbate-mediated GPC1 deaminase degradation of its heparan sulfate side chains. In Canis lupus familiaris (Dog), this protein is Major prion protein (PRNP).